Reading from the N-terminus, the 228-residue chain is Ribose-5-phosphate isomerase A (228 aa).

Substrate contacts are provided by residues 29-32, 85-88, and 98-101; these read TGST, DGAD, and KGGG. Glu-107 serves as the catalytic Proton acceptor. Residue Lys-125 coordinates substrate.

It belongs to the ribose 5-phosphate isomerase family. In terms of assembly, homodimer.

It catalyses the reaction aldehydo-D-ribose 5-phosphate = D-ribulose 5-phosphate. Its pathway is carbohydrate degradation; pentose phosphate pathway; D-ribose 5-phosphate from D-ribulose 5-phosphate (non-oxidative stage): step 1/1. Its function is as follows. Catalyzes the reversible conversion of ribose-5-phosphate to ribulose 5-phosphate. The polypeptide is Ribose-5-phosphate isomerase A (Staphylococcus aureus (strain MRSA252)).